The sequence spans 338 residues: Holliday junction branch migration complex subunit RuvB (338 aa).

A disordered region spans residues 1-22 (MIEADRLIHAEPQGPEERDEQI). A large ATPase domain (RuvB-L) region spans residues 4 to 187 (ADRLIHAEPQ…FGIPLRLEFY (184 aa)). Residues arginine 27, glycine 68, lysine 71, threonine 72, threonine 73, 134-136 (EDY), arginine 177, tyrosine 187, and arginine 224 contribute to the ATP site. Threonine 72 provides a ligand contact to Mg(2+). Residues 188–258 (NTKDLSSIVS…VADLALDMLD (71 aa)) are small ATPAse domain (RuvB-S). A head domain (RuvB-H) region spans residues 261-338 (SEGFDYMDRK…RHFDIIQPEK (78 aa)). Arginine 297, arginine 316, and arginine 321 together coordinate DNA.

The protein belongs to the RuvB family. Homohexamer. Forms an RuvA(8)-RuvB(12)-Holliday junction (HJ) complex. HJ DNA is sandwiched between 2 RuvA tetramers; dsDNA enters through RuvA and exits via RuvB. An RuvB hexamer assembles on each DNA strand where it exits the tetramer. Each RuvB hexamer is contacted by two RuvA subunits (via domain III) on 2 adjacent RuvB subunits; this complex drives branch migration. In the full resolvosome a probable DNA-RuvA(4)-RuvB(12)-RuvC(2) complex forms which resolves the HJ.

It is found in the cytoplasm. The enzyme catalyses ATP + H2O = ADP + phosphate + H(+). Functionally, the RuvA-RuvB-RuvC complex processes Holliday junction (HJ) DNA during genetic recombination and DNA repair, while the RuvA-RuvB complex plays an important role in the rescue of blocked DNA replication forks via replication fork reversal (RFR). RuvA specifically binds to HJ cruciform DNA, conferring on it an open structure. The RuvB hexamer acts as an ATP-dependent pump, pulling dsDNA into and through the RuvAB complex. RuvB forms 2 homohexamers on either side of HJ DNA bound by 1 or 2 RuvA tetramers; 4 subunits per hexamer contact DNA at a time. Coordinated motions by a converter formed by DNA-disengaged RuvB subunits stimulates ATP hydrolysis and nucleotide exchange. Immobilization of the converter enables RuvB to convert the ATP-contained energy into a lever motion, pulling 2 nucleotides of DNA out of the RuvA tetramer per ATP hydrolyzed, thus driving DNA branch migration. The RuvB motors rotate together with the DNA substrate, which together with the progressing nucleotide cycle form the mechanistic basis for DNA recombination by continuous HJ branch migration. Branch migration allows RuvC to scan DNA until it finds its consensus sequence, where it cleaves and resolves cruciform DNA. The polypeptide is Holliday junction branch migration complex subunit RuvB (Shewanella sediminis (strain HAW-EB3)).